The primary structure comprises 376 residues: Lactosylceramide 1,3-N-acetyl-beta-D-glucosaminyltransferase (376 aa).

The Cytoplasmic portion of the chain corresponds to Met-1–Lys-13. The helical; Signal-anchor for type II membrane protein transmembrane segment at Ile-14–Asn-34 threads the bilayer. At Asn-35 to Ala-376 the chain is on the lumenal side. N-linked (GlcNAc...) asparagine glycosylation is present at Asn-57.

Belongs to the glycosyltransferase 31 family. In terms of tissue distribution, highly expressed in adult spleen, placenta and cerebellar Purkinje cells where it colocalizes with HNK-1. Expressed at lower level in brain, lung, thymus and muscle.

The protein localises to the golgi apparatus membrane. The enzyme catalyses a beta-D-Gal-(1-&gt;4)-beta-D-Glc-(1&lt;-&gt;1)-Cer(d18:1(4E)) + UDP-N-acetyl-alpha-D-glucosamine = a beta-D-GlcNAc-(1-&gt;3)-beta-D-Gal-(1-&gt;4)-beta-D-Glc-(1&lt;-&gt;1)-Cer(d18:1(4E)) + UDP + H(+). It catalyses the reaction a neolactoside nLc4Cer(d18:1(4E)) + UDP-N-acetyl-alpha-D-glucosamine = a neolactoside IV(3)-beta-GlcNAc-nLc4Cer(d18:1(4E)) + UDP + H(+). It functions in the pathway protein modification; protein glycosylation. In terms of biological role, beta-1,3-N-acetylglucosaminyltransferase that plays a key role in the synthesis of lacto- or neolacto-series carbohydrate chains on glycolipids, notably by participating in biosynthesis of HNK-1 and Lewis X carbohydrate structures. Has strong activity toward lactosylceramide (LacCer) and neolactotetraosylceramide (nLc(4)Cer; paragloboside), resulting in the synthesis of Lc(3)Cer and neolactopentaosylceramide (nLc(5)Cer), respectively. Plays a central role in regulating neolacto-series glycolipid synthesis during embryonic development. The chain is Lactosylceramide 1,3-N-acetyl-beta-D-glucosaminyltransferase from Mus musculus (Mouse).